Here is a 511-residue protein sequence, read N- to C-terminus: 2,3-bisphosphoglycerate-independent phosphoglycerate mutase (511 aa).

Mn(2+)-binding residues include Asp-14 and Ser-64. The Phosphoserine intermediate role is filled by Ser-64. Residues His-125, 155–156 (RD), Arg-187, Arg-193, 259–262 (RADR), and Lys-333 contribute to the substrate site. Mn(2+) contacts are provided by Asp-400, His-404, Asp-441, His-442, and His-460.

Belongs to the BPG-independent phosphoglycerate mutase family. In terms of assembly, monomer. It depends on Mn(2+) as a cofactor.

It catalyses the reaction (2R)-2-phosphoglycerate = (2R)-3-phosphoglycerate. Its pathway is carbohydrate degradation; glycolysis; pyruvate from D-glyceraldehyde 3-phosphate: step 3/5. Catalyzes the interconversion of 2-phosphoglycerate and 3-phosphoglycerate. This chain is 2,3-bisphosphoglycerate-independent phosphoglycerate mutase, found in Pseudomonas putida (strain ATCC 47054 / DSM 6125 / CFBP 8728 / NCIMB 11950 / KT2440).